The chain runs to 857 residues: Blue light receptor lreA (857 aa).

3 PAS domains span residues 306-328 (IIYV…VGQN), 479-542 (LVEN…TTTD), and 608-642 (LSKS…DLMD). Residues 811 to 836 (CAICQTKKTPEWRRGPSGERDLCNSC) form a GATA-type zinc finger.

In terms of biological role, transcription factor that acts as a blue light sensor. Plays crucial roles in fungal growth and asexual development. Involved in conidiophore formation, sclerotium production, and conidial stress tolerance. Promotes conidiation by inducing the expression of brlA and abaA. Positively regulates the fungal pathogenicity towards maize. In blue light conditions, inhibits aflatoxin B1 (AFB1) biosynthesis by down-regulating the expression of key genes such as aflA, aflJ, aflH, aflO and aflK. In Aspergillus flavus, this protein is Blue light receptor lreA.